We begin with the raw amino-acid sequence, 469 residues long: Ribulose bisphosphate carboxylase large chain (469 aa).

Residue Lys8 is modified to N6,N6,N6-trimethyllysine. Positions 117 and 167 each coordinate substrate. The active-site Proton acceptor is Lys169. Lys171 is a binding site for substrate. Lys195, Asp197, and Glu198 together coordinate Mg(2+). Lys195 carries the N6-carboxylysine modification. His288 (proton acceptor) is an active-site residue. Substrate contacts are provided by Arg289, His321, and Ser373.

It belongs to the RuBisCO large chain family. Type I subfamily. In terms of assembly, heterohexadecamer of 8 large chains and 8 small chains; disulfide-linked. The disulfide link is formed within the large subunit homodimers. Mg(2+) is required as a cofactor. In terms of processing, the disulfide bond which can form in the large chain dimeric partners within the hexadecamer appears to be associated with oxidative stress and protein turnover.

Its subcellular location is the plastid. The protein resides in the chloroplast. The catalysed reaction is 2 (2R)-3-phosphoglycerate + 2 H(+) = D-ribulose 1,5-bisphosphate + CO2 + H2O. The enzyme catalyses D-ribulose 1,5-bisphosphate + O2 = 2-phosphoglycolate + (2R)-3-phosphoglycerate + 2 H(+). Its function is as follows. RuBisCO catalyzes two reactions: the carboxylation of D-ribulose 1,5-bisphosphate, the primary event in carbon dioxide fixation, as well as the oxidative fragmentation of the pentose substrate in the photorespiration process. Both reactions occur simultaneously and in competition at the same active site. The protein is Ribulose bisphosphate carboxylase large chain of Coleonema pulchellum (Confetti bush).